The primary structure comprises 606 residues: Chaperone protein DnaK (606 aa).

Threonine 174 bears the Phosphothreonine; by autocatalysis mark. A disordered region spans residues 576–606 (QAAGSANPGGSQGTSQGNVYEADYKVEDDNK). Residues 597–606 (ADYKVEDDNK) are compositionally biased toward basic and acidic residues.

It belongs to the heat shock protein 70 family.

Acts as a chaperone. This Caldanaerobacter subterraneus subsp. tengcongensis (strain DSM 15242 / JCM 11007 / NBRC 100824 / MB4) (Thermoanaerobacter tengcongensis) protein is Chaperone protein DnaK.